The sequence spans 231 residues: Acyltransferase PGAP2 (231 aa).

Topologically, residues 1 to 22 are cytoplasmic; sequence MQQVPYGSVDRDKPLIRVPFTR. Residues 23–43 traverse the membrane as a helical segment; the sequence is LAVITVCLPLLGLVACIVLAM. The Lumenal portion of the chain corresponds to 44–78; it reads LYHYNDATYTHCQVPNYLPSISAAISLTPERYIWR. A helical transmembrane segment spans residues 79-99; the sequence is FSIGLHSAPRFLVAAAYLSFY. The Cytoplasmic portion of the chain corresponds to 100-110; that stretch reads RGRFSRRLTEQ. Residues 111 to 131 form a helical membrane-spanning segment; that stretch reads LLSGFTFLLALSENVGLLLLT. The Lumenal portion of the chain corresponds to 132–146; sequence YVSSTETYSVHKSGF. The chain crosses the membrane as a helical span at residues 147 to 167; that stretch reads ILFIGSSLFHMLCTCKLWSLI. The Cytoplasmic portion of the chain corresponds to 168 to 179; that stretch reads VKYSISSEEMMS. Residues 180–200 traverse the membrane as a helical segment; that stretch reads YWFKLRLFLFNGGCCVLAVYF. The Lumenal segment spans residues 201–231; sequence YRRHNTYCEEGITHASRCVSIWWCCPTWPST.

It belongs to the PGAP2 family.

The protein localises to the golgi apparatus membrane. In terms of biological role, involved in the fatty acid remodeling steps of GPI-anchor maturation where the unsaturated acyl chain at sn-2 of inositol phosphate is replaced by a saturated stearoyl chain. May catalyze the second step of the fatty acid remodeling, by reacylating a lyso-GPI intermediate at sn-2 of inositol phosphate by a saturated chain. The fatty acid remodeling steps is critical for the integration of GPI-APs into lipid rafts. This is Acyltransferase PGAP2 from Danio rerio (Zebrafish).